An 88-amino-acid polypeptide reads, in one-letter code: Small ribosomal subunit protein bS20 (88 aa).

Residues methionine 1–methionine 27 are disordered. Residues alanine 7–alanine 22 are compositionally biased toward basic residues.

It belongs to the bacterial ribosomal protein bS20 family.

Functionally, binds directly to 16S ribosomal RNA. The protein is Small ribosomal subunit protein bS20 of Cellvibrio japonicus (strain Ueda107) (Pseudomonas fluorescens subsp. cellulosa).